The chain runs to 142 residues: 5a,11a-dehydrotetracycline/5a,11a-dehydrooxytetracycline reductase (142 aa).

Belongs to the pyridoxamine 5'-phosphate oxidase family.

It catalyses the reaction tetracycline + oxidized coenzyme F420-(gamma-L-Glu)(n) + H(+) = 5a,11a-dehydrotetracycline + reduced coenzyme F420-(gamma-L-Glu)(n). The catalysed reaction is oxytetracycline + oxidized coenzyme F420-(gamma-L-Glu)(n) + H(+) = 5a,11a-dehydrooxytetracycline + reduced coenzyme F420-(gamma-L-Glu)(n). The protein operates within antibiotic biosynthesis; oxytetracycline biosynthesis. Involved in the biosynthesis of the antibiotics tetracycline and oxytetracycline. Catalyzes the C(5) reduction of 5a,11a-dehydrooxytetracycline to yield oxytetracycline as a major product. Also catalyzes the C(12) reduction of 5a,11a-dehydrotetracycline (12-dehydrotetracycline) to produce tetracycline as a minor product. This Streptomyces rimosus subsp. rimosus (strain ATCC 10970 / DSM 40260 / JCM 4667 / NRRL 2234) protein is 5a,11a-dehydrotetracycline/5a,11a-dehydrooxytetracycline reductase.